Consider the following 161-residue polypeptide: Glycine-rich RNA-binding protein blt801 (161 aa).

Residues 6 to 84 (YRCFVGGLRW…RNITVNEAQS (79 aa)) enclose the RRM domain. Positions 72 to 161 (LDGRNITVNE…GGSGGGNWRE (90 aa)) are disordered. S87 is modified (phosphoserine; by PKA). Residues 89 to 161 (GGGGFGGGGG…GGSGGGNWRE (73 aa)) show a composition bias toward gly residues.

Binds single-stranded DNA and homoribopolymers of guanine, uracil and adenine, but not cytosine. Also binds RNA, with a preference for RNA containing a high proportion of adenine within an open loop structure. Possibly has a role in RNA transcription or processing during stress. The chain is Glycine-rich RNA-binding protein blt801 from Hordeum vulgare (Barley).